The following is a 911-amino-acid chain: Probable dipeptidyl-aminopeptidase B (911 aa).

Positions 1–39 are disordered; the sequence is MPRPRAAKEEETELLAQHQESPRPSSDGSEASASSISTT. Residues 1–97 lie on the Cytoplasmic side of the membrane; it reads MPRPRAAKEE…TPVDKKARRT (97 aa). Over residues 25–39 the composition is skewed to low complexity; the sequence is SSDGSEASASSISTT. The chain crosses the membrane as a helical; Signal-anchor for type II membrane protein span at residues 98–118; the sequence is LWIVGTICAVGWALALVSFLM. The Vacuolar segment spans residues 119–911; it reads NGNYKHSSTR…AQADARSLGR (793 aa). Residues Asn268 and Asn564 are each glycosylated (N-linked (GlcNAc...) asparagine). Ser755 acts as the Charge relay system in catalysis. An N-linked (GlcNAc...) asparagine glycan is attached at Asn809. Active-site charge relay system residues include Asp832 and His865.

It belongs to the peptidase S9B family.

Its subcellular location is the vacuole membrane. It carries out the reaction Release of an N-terminal dipeptide, Xaa-Yaa-|-Zaa-, from a polypeptide, preferentially when Yaa is Pro, provided Zaa is neither Pro nor hydroxyproline.. In terms of biological role, type IV dipeptidyl-peptidase which removes N-terminal dipeptides sequentially from polypeptides having unsubstituted N-termini provided that the penultimate residue is proline. The protein is Probable dipeptidyl-aminopeptidase B (DAPB) of Phaeosphaeria nodorum (strain SN15 / ATCC MYA-4574 / FGSC 10173) (Glume blotch fungus).